Consider the following 256-residue polypeptide: Undecaprenyl-diphosphatase 2 (256 aa).

8 helical membrane-spanning segments follow: residues 1–21 (MDIFNAIILGIIEGITEFLPI), 38–58 (ATATNQAFGVIIQLAAILAVL), 70–90 (LNLWIKVAIAFIPLGIIAFIF), 97–117 (LFNVPVVGVMFIVGGVIFLLL), 134–154 (VTYKQAIWIGIAQVFALIPGT), 175–195 (AEFSFLLGLPVLAAASGYDLL), 208–228 (ALAVGFVTSFIVAYFTIKLFI), and 236–256 (FVSFGIYRIVFGVILLTIAYV).

This sequence belongs to the UppP family.

Its subcellular location is the cell inner membrane. It catalyses the reaction di-trans,octa-cis-undecaprenyl diphosphate + H2O = di-trans,octa-cis-undecaprenyl phosphate + phosphate + H(+). Catalyzes the dephosphorylation of undecaprenyl diphosphate (UPP). Confers resistance to bacitracin. This Pseudoalteromonas translucida (strain TAC 125) protein is Undecaprenyl-diphosphatase 2.